The primary structure comprises 361 residues: Chorismate synthase (361 aa).

Arg48 and Arg54 together coordinate NADP(+). FMN contacts are provided by residues 125-127 (RSS), 238-239 (NA), Gly278, 293-297 (KPTSS), and Arg319.

Belongs to the chorismate synthase family. Homotetramer. It depends on FMNH2 as a cofactor.

The enzyme catalyses 5-O-(1-carboxyvinyl)-3-phosphoshikimate = chorismate + phosphate. It functions in the pathway metabolic intermediate biosynthesis; chorismate biosynthesis; chorismate from D-erythrose 4-phosphate and phosphoenolpyruvate: step 7/7. In terms of biological role, catalyzes the anti-1,4-elimination of the C-3 phosphate and the C-6 proR hydrogen from 5-enolpyruvylshikimate-3-phosphate (EPSP) to yield chorismate, which is the branch point compound that serves as the starting substrate for the three terminal pathways of aromatic amino acid biosynthesis. This reaction introduces a second double bond into the aromatic ring system. The sequence is that of Chorismate synthase from Escherichia coli O7:K1 (strain IAI39 / ExPEC).